Consider the following 571-residue polypeptide: Putative phospholipase B-like 1 (571 aa).

The signal sequence occupies residues 1–18 (MNWIFIFLAAAVAIGCEA). N-linked (GlcNAc...) asparagine glycans are attached at residues Asn-62, Asn-149, Asn-442, and Asn-473.

Belongs to the phospholipase B-like family.

The protein resides in the lysosome. In terms of biological role, putative phospholipase. The polypeptide is Putative phospholipase B-like 1 (Caenorhabditis elegans).